Reading from the N-terminus, the 213-residue chain is Ribosomal RNA small subunit methyltransferase G (213 aa).

S-adenosyl-L-methionine is bound by residues Gly72, Phe77, 125 to 126 (IE), and Arg141.

The protein belongs to the methyltransferase superfamily. RNA methyltransferase RsmG family.

The protein resides in the cytoplasm. The catalysed reaction is guanosine(527) in 16S rRNA + S-adenosyl-L-methionine = N(7)-methylguanosine(527) in 16S rRNA + S-adenosyl-L-homocysteine. Specifically methylates the N7 position of guanine in position 527 of 16S rRNA. The chain is Ribosomal RNA small subunit methyltransferase G from Rhizobium meliloti (strain 1021) (Ensifer meliloti).